The following is a 230-amino-acid chain: Cytidylate kinase (230 aa).

Residue 12 to 20 (GPSGAGKGT) participates in ATP binding.

The protein belongs to the cytidylate kinase family. Type 1 subfamily.

The protein resides in the cytoplasm. It catalyses the reaction CMP + ATP = CDP + ADP. The enzyme catalyses dCMP + ATP = dCDP + ADP. This chain is Cytidylate kinase, found in Shewanella piezotolerans (strain WP3 / JCM 13877).